The following is a 517-amino-acid chain: 2,3-bisphosphoglycerate-independent phosphoglycerate mutase 1 (517 aa).

Mn(2+)-binding residues include D17 and S67. The Phosphoserine intermediate role is filled by S67. Substrate contacts are provided by residues H128, 158–159 (RD), R190, R196, 267–270 (RPDR), and K340. The Mn(2+) site is built by D407, H411, D448, H449, and H467.

Belongs to the BPG-independent phosphoglycerate mutase family. Mn(2+) serves as cofactor.

The enzyme catalyses (2R)-2-phosphoglycerate = (2R)-3-phosphoglycerate. The protein operates within carbohydrate degradation; glycolysis; pyruvate from D-glyceraldehyde 3-phosphate: step 3/5. Functionally, catalyzes the interconversion of 2-phosphoglycerate and 3-phosphoglycerate. In Methanosarcina barkeri (strain Fusaro / DSM 804), this protein is 2,3-bisphosphoglycerate-independent phosphoglycerate mutase 1.